The sequence spans 541 residues: MAHKQVLFHSAAREKILRGASLLADAVRVTLGPKSKSVLIQKGWGAPIVCNDGVTIAKEFDLKDAEENLGAQVLRQLAEKTGDVVGDGTSTSTILAHAILSDGVRNVVAGASAIDLKRGLDRGTQAAIAALRAMATPVKSRAEKVQVATISAHNDASIGELVADAIEKVGGDGVISVEESKTTETLLDVVEGMKFDRGFLSPYFITDADRMESVLQDPYVLLCDHKIGALRDLVPLLEQVAKSGQPLLIIAEDIEGEALATLIVNQLRGVLKACAVKAPGFGDRRKAMLEDIAILTGAQVISEEIGLNLENATLQQLGRAARVVADKENTTLIGSGGDRTRIDARLGQIRVEIEKTTSDYDREKLEERLAKLSGGVAVIRVGAPTEAEMKAKKEALDDAISSTKAAVAEGIVPGGGLALLRAVAAVAKEEAACEGDERTGVQILRRALEAPARQIAENSAADGGVVVARMLEGEGSIGFDASRKVYVDLVAAGIVDPVKVVRTALENAVSVASVLLLTEATMTEIPEPKRERLPEPDLAVQ.

Residues 30–33 (TLGP), Gly-415, and Asp-496 each bind ATP.

Belongs to the chaperonin (HSP60) family. In terms of assembly, forms a cylinder of 14 subunits composed of two heptameric rings stacked back-to-back. Interacts with the co-chaperonin GroES.

It localises to the cytoplasm. The enzyme catalyses ATP + H2O + a folded polypeptide = ADP + phosphate + an unfolded polypeptide.. Its function is as follows. Together with its co-chaperonin GroES, plays an essential role in assisting protein folding. The GroEL-GroES system forms a nano-cage that allows encapsulation of the non-native substrate proteins and provides a physical environment optimized to promote and accelerate protein folding. In Bradyrhizobium diazoefficiens (strain JCM 10833 / BCRC 13528 / IAM 13628 / NBRC 14792 / USDA 110), this protein is Chaperonin GroEL 5.